The following is a 224-amino-acid chain: UPF0111 protein TC_0063 (224 aa).

Belongs to the UPF0111 family.

The protein is UPF0111 protein TC_0063 of Chlamydia muridarum (strain MoPn / Nigg).